Here is a 452-residue protein sequence, read N- to C-terminus: Tubulin alpha-8 chain (452 aa).

Residues Q15, E74, S143, G147, T148, T182, N209, and N231 each coordinate GTP. E74 provides a ligand contact to Mg(2+). E257 is an active-site residue.

It belongs to the tubulin family. Dimer of alpha and beta chains. A typical microtubule is a hollow water-filled tube with an outer diameter of 25 nm and an inner diameter of 15 nM. Alpha-beta heterodimers associate head-to-tail to form protofilaments running lengthwise along the microtubule wall with the beta-tubulin subunit facing the microtubule plus end conferring a structural polarity. Microtubules usually have 13 protofilaments but different protofilament numbers can be found in some organisms and specialized cells. Mg(2+) is required as a cofactor.

It is found in the cytoplasm. The protein localises to the cytoskeleton. It catalyses the reaction GTP + H2O = GDP + phosphate + H(+). In terms of biological role, tubulin is the major constituent of microtubules, a cylinder consisting of laterally associated linear protofilaments composed of alpha- and beta-tubulin heterodimers. Microtubules grow by the addition of GTP-tubulin dimers to the microtubule end, where a stabilizing cap forms. Below the cap, tubulin dimers are in GDP-bound state, owing to GTPase activity of alpha-tubulin. The sequence is that of Tubulin alpha-8 chain (tba-8) from Caenorhabditis elegans.